The chain runs to 282 residues: HTH-type transcriptional activator RhaR (282 aa).

Positions 179-277 constitute an HTH araC/xylS-type domain; that stretch reads DKLITALANS…GMTPSQWRHL (99 aa). DNA-binding regions (H-T-H motif) lie at residues 196-217 and 244-267; these read DAFCQQEQCSERVLRQQFRAQT and ISEISMQCGFEDSNYFSVVFTRET.

As to quaternary structure, binds DNA as a dimer.

It localises to the cytoplasm. Functionally, activates expression of the rhaSR operon in response to L-rhamnose. This Salmonella typhimurium (strain LT2 / SGSC1412 / ATCC 700720) protein is HTH-type transcriptional activator RhaR.